Reading from the N-terminus, the 494-residue chain is UPF0371 protein SPy_1343/M5005_Spy1095 (494 aa).

It belongs to the UPF0371 family.

This chain is UPF0371 protein SPy_1343/M5005_Spy1095, found in Streptococcus pyogenes serotype M1.